We begin with the raw amino-acid sequence, 230 residues long: UPF0502 protein Oter_3715 (230 aa).

This sequence belongs to the UPF0502 family.

This is UPF0502 protein Oter_3715 from Opitutus terrae (strain DSM 11246 / JCM 15787 / PB90-1).